A 336-amino-acid chain; its full sequence is 4-hydroxythreonine-4-phosphate dehydrogenase (336 aa).

Substrate is bound by residues His142 and Thr143. His172, His217, and His274 together coordinate a divalent metal cation. The substrate site is built by Lys282, Asn291, and Arg300.

This sequence belongs to the PdxA family. In terms of assembly, homodimer. Requires Zn(2+) as cofactor. Mg(2+) is required as a cofactor. It depends on Co(2+) as a cofactor.

It is found in the cytoplasm. The catalysed reaction is 4-(phosphooxy)-L-threonine + NAD(+) = 3-amino-2-oxopropyl phosphate + CO2 + NADH. It functions in the pathway cofactor biosynthesis; pyridoxine 5'-phosphate biosynthesis; pyridoxine 5'-phosphate from D-erythrose 4-phosphate: step 4/5. Functionally, catalyzes the NAD(P)-dependent oxidation of 4-(phosphooxy)-L-threonine (HTP) into 2-amino-3-oxo-4-(phosphooxy)butyric acid which spontaneously decarboxylates to form 3-amino-2-oxopropyl phosphate (AHAP). The protein is 4-hydroxythreonine-4-phosphate dehydrogenase of Trichlorobacter lovleyi (strain ATCC BAA-1151 / DSM 17278 / SZ) (Geobacter lovleyi).